Consider the following 555-residue polypeptide: MDGIVPDIAVGTKRGSDELFSTCVSNGPFIMSSSASAANGNDSKKFKGDNRSAGVPSRVIHVRKLPSDVTEGEVISLGLPFGKVTNLLMLKGKNQAFIEMNTEEAANTMVNYYTSVAPVLRGQPIYIQFSNHKELKTDSSPNQARAQAALQAVNSVQSGNLALAASAAAVDAGMAMAGQSPVLRIIVENLFYPVTLDVLHQIFSKFGTVLKIITFTKNNQFQALLQYADPVSAQHAKLSLDGQNIYNACCTLRIDFSKLTSLNVKYNNDKSRDYTRPDLPSGDSQPSLDQTMAAAFGAPGIMSASPYAGAGFPPTFAIPQAAGLSVPNVHGALAPLAIPSAAAAAAASRIAIPGLAGAGNSVLLVSNLNPERVTPQSLFILFGVYGDVQRVKILFNKKENALVQMADGSQAQLAMSHLNGHKLHGKSVRITLSKHQSVQLPREGQEDQGLTKDYGSSPLHRFKKPGSKNFQNIFPPSATLHLSNIPPSVSEDDLKSLFSSNGGVVKGFKFFQKDRKMALIQMGSVEEAVQALIELHNHDLGENHHLRVSFSKSTI.

Met1 carries the post-translational modification N-acetylmethionine. Phosphoserine is present on Ser16. 3 consecutive RRM domains span residues 58–142, 183–259, and 361–412; these read RVIH…SSPN, LRII…FSKL, and SVLL…SQAQ. Lys64 participates in a covalent cross-link: Glycyl lysine isopeptide (Lys-Gly) (interchain with G-Cter in SUMO2). Phosphotyrosine is present on Tyr126. Thr137 bears the Phosphothreonine mark. Phosphoserine is present on Ser140. A Glycyl lysine isopeptide (Lys-Gly) (interchain with G-Cter in SUMO2) cross-link involves residue Lys217. Residues 435–457 are disordered; it reads HQSVQLPREGQEDQGLTKDYGSS. Position 457 is a phosphoserine (Ser457). An RRM 4 domain is found at 478–553; it reads ATLHLSNIPP…HHLRVSFSKS (76 aa).

In terms of assembly, monomer. Part of a ternary complex containing KHSRP, PTBP1, PTBP2 and HNRPH1. Interacts with SFPQ. Interacts with RAVER1. Interacts with IVNS1ABP (via BACK domain); the interaction is direct. Expressed in myoblast; expression gradually decreases during muscle cell differentiation (at protein level).

The protein resides in the nucleus. Plays a role in pre-mRNA splicing and in the regulation of alternative splicing events. Activates exon skipping of its own pre-mRNA during muscle cell differentiation. Binds to the polypyrimidine tract of introns. May promote RNA looping when bound to two separate polypyrimidine tracts in the same pre-mRNA. May promote the binding of U2 snRNP to pre-mRNA. Cooperates with RAVER1 to modulate switching between mutually exclusive exons during maturation of the TPM1 pre-mRNA. Represses the splicing of MAPT/Tau exon 10. Binds to polypyrimidine-rich controlling element (PCE) of CFTR and promotes exon skipping of CFTR exon 9, thereby antagonizing TIA1 and its role in exon inclusion of CFTR exon 9. Plays a role in the splicing of pyruvate kinase PKM by binding repressively to a polypyrimidine tract flanking PKM exon 9, inhibiting exon 9 inclusion and resulting in exon 10 inclusion and production of the PKM M2 isoform. This Mus musculus (Mouse) protein is Polypyrimidine tract-binding protein 1 (Ptbp1).